A 232-amino-acid chain; its full sequence is Phosphatidylserine decarboxylase proenzyme (232 aa).

Serine 190 functions as the Schiff-base intermediate with substrate; via pyruvic acid in the catalytic mechanism. Serine 190 is subject to Pyruvic acid (Ser); by autocatalysis.

It belongs to the phosphatidylserine decarboxylase family. PSD-A subfamily. Heterodimer of a large membrane-associated beta subunit and a small pyruvoyl-containing alpha subunit. Requires pyruvate as cofactor. Is synthesized initially as an inactive proenzyme. Formation of the active enzyme involves a self-maturation process in which the active site pyruvoyl group is generated from an internal serine residue via an autocatalytic post-translational modification. Two non-identical subunits are generated from the proenzyme in this reaction, and the pyruvate is formed at the N-terminus of the alpha chain, which is derived from the carboxyl end of the proenzyme. The post-translation cleavage follows an unusual pathway, termed non-hydrolytic serinolysis, in which the side chain hydroxyl group of the serine supplies its oxygen atom to form the C-terminus of the beta chain, while the remainder of the serine residue undergoes an oxidative deamination to produce ammonia and the pyruvoyl prosthetic group on the alpha chain.

It is found in the cell membrane. The enzyme catalyses a 1,2-diacyl-sn-glycero-3-phospho-L-serine + H(+) = a 1,2-diacyl-sn-glycero-3-phosphoethanolamine + CO2. Its pathway is phospholipid metabolism; phosphatidylethanolamine biosynthesis; phosphatidylethanolamine from CDP-diacylglycerol: step 2/2. In terms of biological role, catalyzes the formation of phosphatidylethanolamine (PtdEtn) from phosphatidylserine (PtdSer). This is Phosphatidylserine decarboxylase proenzyme from Brucella abortus (strain S19).